The chain runs to 416 residues: CCA-adding enzyme (416 aa).

ATP is bound by residues serine 42 and lysine 45. CTP is bound by residues serine 42 and lysine 45. Positions 54, 56, and 107 each coordinate Mg(2+). ATP contacts are provided by histidine 130, lysine 150, and tyrosine 159. Residues histidine 130, lysine 150, and tyrosine 159 each contribute to the CTP site.

The protein belongs to the tRNA nucleotidyltransferase/poly(A) polymerase family. Archaeal CCA-adding enzyme subfamily. As to quaternary structure, homodimer. Mg(2+) serves as cofactor.

The catalysed reaction is a tRNA precursor + 2 CTP + ATP = a tRNA with a 3' CCA end + 3 diphosphate. It catalyses the reaction a tRNA with a 3' CCA end + 2 CTP + ATP = a tRNA with a 3' CCACCA end + 3 diphosphate. In terms of biological role, catalyzes the addition and repair of the essential 3'-terminal CCA sequence in tRNAs without using a nucleic acid template. Adds these three nucleotides in the order of C, C, and A to the tRNA nucleotide-73, using CTP and ATP as substrates and producing inorganic pyrophosphate. tRNA 3'-terminal CCA addition is required both for tRNA processing and repair. Also involved in tRNA surveillance by mediating tandem CCA addition to generate a CCACCA at the 3' terminus of unstable tRNAs. While stable tRNAs receive only 3'-terminal CCA, unstable tRNAs are marked with CCACCA and rapidly degraded. This chain is CCA-adding enzyme, found in Sulfolobus acidocaldarius (strain ATCC 33909 / DSM 639 / JCM 8929 / NBRC 15157 / NCIMB 11770).